The chain runs to 458 residues: MPKLYIKTYGCQMNERDSEQVARMFVQKGYTMTDREDEADVILFNSCSIREQAEQKALGKMGLLAKQQRHRPHVVYGMMGCMAQSKKEELFKELPRLDLVVGTQKYHRVFEHVDGILRARQERRMDELQTAFSGTHVCDVAEEADSQNRIRDHLNPGVRSTAYVSIMQGCEMKCAYCIVPYTRGAERSRPIRDVVDEVKMLADAGVKEVTLLGQIVNRYGRQMETAGGKGGFVQLLEAVHEVEGIRRIRFVSPHPIGFRQDLVQAFTYLPKLCSHIHFPMQSGSDRILKMMRRPYRNETYLDLCSRMKQARPDLSITTDIIVGFPGETEEDYLLTRQAVEQVQFDNAFIFRYSPRRGTPAAVMENQIPEEVKEARNQDLLAVVNEIAIRKNRDLVGTVQEVLLEGPSKTNAARLSGRTSQNKPVMVDAAPDLAGEILPIRIEESTGFTLYGVPCPSRG.

One can recognise an MTTase N-terminal domain in the interval 2–118; the sequence is PKLYIKTYGC…VFEHVDGILR (117 aa). Residues Cys-11, Cys-47, Cys-81, Cys-170, Cys-174, and Cys-177 each coordinate [4Fe-4S] cluster. A Radical SAM core domain is found at 156 to 389; it reads PGVRSTAYVS…LAVVNEIAIR (234 aa). The 64-residue stretch at 392-455 folds into the TRAM domain; it reads RDLVGTVQEV…GFTLYGVPCP (64 aa).

It belongs to the methylthiotransferase family. MiaB subfamily. Monomer. Requires [4Fe-4S] cluster as cofactor.

Its subcellular location is the cytoplasm. The enzyme catalyses N(6)-dimethylallyladenosine(37) in tRNA + (sulfur carrier)-SH + AH2 + 2 S-adenosyl-L-methionine = 2-methylsulfanyl-N(6)-dimethylallyladenosine(37) in tRNA + (sulfur carrier)-H + 5'-deoxyadenosine + L-methionine + A + S-adenosyl-L-homocysteine + 2 H(+). Functionally, catalyzes the methylthiolation of N6-(dimethylallyl)adenosine (i(6)A), leading to the formation of 2-methylthio-N6-(dimethylallyl)adenosine (ms(2)i(6)A) at position 37 in tRNAs that read codons beginning with uridine. This chain is tRNA-2-methylthio-N(6)-dimethylallyladenosine synthase, found in Akkermansia muciniphila (strain ATCC BAA-835 / DSM 22959 / JCM 33894 / BCRC 81048 / CCUG 64013 / CIP 107961 / Muc).